Reading from the N-terminus, the 459-residue chain is Vacuolar fusion protein CCZ1 homolog (459 aa).

Belongs to the CCZ1 family.

The protein is Vacuolar fusion protein CCZ1 homolog of Nematostella vectensis (Starlet sea anemone).